Consider the following 367-residue polypeptide: Pantothenate kinase CAB1 (367 aa).

The protein belongs to the type II pantothenate kinase family.

Its subcellular location is the cytoplasm. It is found in the nucleus. It carries out the reaction (R)-pantothenate + ATP = (R)-4'-phosphopantothenate + ADP + H(+). The protein operates within cofactor biosynthesis; coenzyme A biosynthesis; CoA from (R)-pantothenate: step 1/5. Its activity is regulated as follows. Regulated by feedback inhibition by malonyl-CoA. In terms of biological role, plays a role in the physiological regulation of the intracellular CoA concentration. The sequence is that of Pantothenate kinase CAB1 (CAB1) from Saccharomyces cerevisiae (strain ATCC 204508 / S288c) (Baker's yeast).